Reading from the N-terminus, the 543-residue chain is Light-independent protochlorophyllide reductase subunit B (543 aa).

Aspartate 36 serves as a coordination point for [4Fe-4S] cluster. Aspartate 287 (proton donor) is an active-site residue. 422–423 serves as a coordination point for substrate; it reads GL.

Belongs to the ChlB/BchB/BchZ family. Protochlorophyllide reductase is composed of three subunits; BchL, BchN and BchB. Forms a heterotetramer of two BchB and two BchN subunits. The cofactor is [4Fe-4S] cluster.

The catalysed reaction is chlorophyllide a + oxidized 2[4Fe-4S]-[ferredoxin] + 2 ADP + 2 phosphate = protochlorophyllide a + reduced 2[4Fe-4S]-[ferredoxin] + 2 ATP + 2 H2O. Its pathway is porphyrin-containing compound metabolism; bacteriochlorophyll biosynthesis (light-independent). In terms of biological role, component of the dark-operative protochlorophyllide reductase (DPOR) that uses Mg-ATP and reduced ferredoxin to reduce ring D of protochlorophyllide (Pchlide) to form chlorophyllide a (Chlide). This reaction is light-independent. The NB-protein (BchN-BchB) is the catalytic component of the complex. This Rubrivivax gelatinosus (strain NBRC 100245 / IL144) protein is Light-independent protochlorophyllide reductase subunit B.